The primary structure comprises 363 residues: Dihydroorotate dehydrogenase (quinone) (363 aa).

FMN-binding positions include 70–74 (AGFDK) and Thr-94. Residue Lys-74 coordinates substrate. Position 119–123 (119–123 (NRMGF)) interacts with substrate. Residues Asn-147 and Asn-180 each coordinate FMN. Position 180 (Asn-180) interacts with substrate. Ser-183 serves as the catalytic Nucleophile. Asn-185 serves as a coordination point for substrate. FMN-binding residues include Lys-216 and Thr-244. 245–246 (NT) serves as a coordination point for substrate. FMN-binding positions include Gly-270, Gly-299, and 320 to 321 (YT).

It belongs to the dihydroorotate dehydrogenase family. Type 2 subfamily. In terms of assembly, monomer. Requires FMN as cofactor.

It is found in the cell membrane. The enzyme catalyses (S)-dihydroorotate + a quinone = orotate + a quinol. Its pathway is pyrimidine metabolism; UMP biosynthesis via de novo pathway; orotate from (S)-dihydroorotate (quinone route): step 1/1. Catalyzes the conversion of dihydroorotate to orotate with quinone as electron acceptor. The polypeptide is Dihydroorotate dehydrogenase (quinone) (Corynebacterium diphtheriae (strain ATCC 700971 / NCTC 13129 / Biotype gravis)).